A 507-amino-acid polypeptide reads, in one-letter code: Sugar transport protein 8 (507 aa).

Residues 1 to 21 (MAVVISSNGNSKSFDAKMTVY) are Cytoplasmic-facing. 12 helical membrane passes run 22 to 42 (VFICVIIAAVGGLIFGYDIGI), 79 to 99 (FLQLFTSSLYLAALVASFFAS), 116 to 136 (IFFLIGVGLAAGAVNIYMLII), 139 to 159 (ILLGFGVGFGNQAVPLFLSEI), 166 to 186 (GGLNIVFQLMVTIGILIANIV), 200 to 220 (IALGGAGIPALILLFGSLLIC), 281 to 301 (FVIGMLLQFFQQFTGINAIMF), 319 to 339 (LSAVVTGTINVLSTFVGIFLV), 346 to 366 (FLLLQSSVHMLICQLVIGIIL), 382 to 402 (LVVVIFVCVYVMGFAWSWGPL), 419 to 439 (GFALAVSCNMFFTFVIAQAFL), and 448 to 468 (GIFFFFSGWIVVMGLFALFFV). The Cytoplasmic segment spans residues 469–507 (PETKGVSIDDMRDSVWKLHWYWKRFMLEEDEHDVEKRTD).

Belongs to the major facilitator superfamily. Sugar transporter (TC 2.A.1.1) family.

Its subcellular location is the membrane. Its function is as follows. Mediates an active uptake of hexoses, probably by sugar/hydrogen symport. The sequence is that of Sugar transport protein 8 (STP8) from Arabidopsis thaliana (Mouse-ear cress).